The sequence spans 246 residues: Dihydroorotate dehydrogenase B (NAD(+)), electron transfer subunit (246 aa).

In terms of domain architecture, FAD-binding FR-type spans 3 to 97; it reads EKYTVEKVYE…TGPLGNGFNV (95 aa). Residues 50–53 and 72–73 each bind FAD; these read RPIS and GT. 4 residues coordinate [2Fe-2S] cluster: cysteine 211, cysteine 216, cysteine 219, and cysteine 231.

This sequence belongs to the PyrK family. As to quaternary structure, heterotetramer of 2 PyrK and 2 PyrD type B subunits. The cofactor is [2Fe-2S] cluster. FAD serves as cofactor.

It functions in the pathway pyrimidine metabolism; UMP biosynthesis via de novo pathway; orotate from (S)-dihydroorotate (NAD(+) route): step 1/1. Functionally, responsible for channeling the electrons from the oxidation of dihydroorotate from the FMN redox center in the PyrD type B subunit to the ultimate electron acceptor NAD(+). The protein is Dihydroorotate dehydrogenase B (NAD(+)), electron transfer subunit of Clostridium acetobutylicum (strain ATCC 824 / DSM 792 / JCM 1419 / IAM 19013 / LMG 5710 / NBRC 13948 / NRRL B-527 / VKM B-1787 / 2291 / W).